The sequence spans 332 residues: RING finger protein 225 (332 aa).

The segment at 1–55 (MPCPRLPWLRRHRTSQGSGPSSPSTVSAPNSPSRGEDEDAEEEEGDGTPGSGPIL) is disordered. Positions 15–27 (SQGSGPSSPSTVS) are enriched in low complexity. Positions 36–46 (EDEDAEEEEGD) are enriched in acidic residues. The segment at 63 to 111 (CLICVSPFDGIFKLPKRLDCGHVFCLECLARLSLATAGGGDAVACPMCR) adopts an RING-type zinc-finger fold. Residues 121-187 (GLPALPTQPG…PPPLRLGRPL (67 aa)) form a disordered region. The chain crosses the membrane as a helical span at residues 205-225 (ALAVLVAAGLVVSGVYIFFLI). The interval 259–332 (THAWTRRPTK…ADGKKVQLQQ (74 aa)) is disordered. Composition is skewed to basic and acidic residues over residues 280–295 (ATKDTPELEEATKDPV) and 323–332 (ADGKKVQLQQ).

It is found in the membrane. In Mus musculus (Mouse), this protein is RING finger protein 225.